The chain runs to 156 residues: Snaclec A6 (156 aa).

The first 23 residues, 1 to 23, serve as a signal peptide directing secretion; that stretch reads MGRSISVSFGLLVVFLSLSGTGA. Cystine bridges form between Cys27/Cys38, Cys55/Cys154, and Cys129/Cys146. The C-type lectin domain occupies 34–155; it reads HEGHCYKVFN…CGKPYRFTCE (122 aa).

Belongs to the snaclec family. As to quaternary structure, heterodimer; disulfide-linked. As to expression, expressed by the venom gland.

The protein resides in the secreted. In terms of biological role, interferes with one step of hemostasis (modulation of platelet aggregation, or coagulation cascade, for example). The protein is Snaclec A6 of Macrovipera lebetinus (Levantine viper).